We begin with the raw amino-acid sequence, 424 residues long: Glucan endo-1,3-alpha-glucosidase agn1 (424 aa).

A signal peptide spans 1 to 20 (MKLVLFLVLLFSALINLTNA).

It belongs to the glycosyl hydrolase 71 family. As to quaternary structure, monomer. In terms of processing, not glycosylated.

The protein localises to the secreted. It is found in the cell wall. The enzyme catalyses Endohydrolysis of (1-&gt;3)-alpha-D-glucosidic linkages in isolichenin, pseudonigeran and nigeran.. Functionally, has a role in cell separation where it is required for the degradation of the cell wall material surrounding the septum (the septum edging) which must be hydrolyzed before full separation of the daughter cells can occur. Hydrolyzes 1,3-alpha-glucan predominantly into pentasaccharides. This is Glucan endo-1,3-alpha-glucosidase agn1 (agn1) from Schizosaccharomyces pombe (strain 972 / ATCC 24843) (Fission yeast).